A 700-amino-acid polypeptide reads, in one-letter code: MSESVQEAKSALSKIRNIGITAHIDAGKTTTTERILYYTGVSHKIGEVHEGNTTTDYMAQERERGITITSAAVTCEWNDHRINIIDTPGHIDFNIEVNRSLRVLDGAIFVIEGVAGVQPQSETNWRLADRYNVPRIIFINKLDRTGADFYYAFSTLKEKLDIVAVPLQLPIGAEENFIGVVDLVEMRAIVWEGGELGAKFHYEEIPDDLKEKAAEARQTLLDTALAMDDAAMEEYFEKGDVDVAILKKCIKKGAISGEFRPVMCGTAFKNKGVQPLLDAVIDYLPAPDEVEGIRIAPPEGEEVDEDFLPIVPVDPDGKFAGLAFKIISDKYGTLTFVRVYRGVLNSGDTILNTTKGHKERVGRMFQMHADKRQEVKSVGAGDIAAFVGLKDTVTGDTLADAADPVVLERMQFPVPVIDISVEPKTKDAVEKMTLALQKLTAEDPSLHLKTDQETGQTILSGMGELHLDIIVDRLRREYGVDANIGAPQVAYRETITKPHVETYTHKKQSGGSGQFAEVKIEFAPSEKPDEIIFENKVVGGTVPKEYIPAVEKGIRMQSTTGVLAGFPTVDFKFTLLDGKYHDVDSSALAFEIAAKACFREGMKNAGPVILEPIMDVEITTPNDHVGDVVGDLNRRRGIIQNQETAGSTVMIRAQVPLKEMFGYISHLRSATKGRASFTMQFHHYDPVPRNVAEEIIAKSA.

One can recognise a tr-type G domain in the interval 13–288 (SKIRNIGITA…AVIDYLPAPD (276 aa)). Residues 22 to 29 (AHIDAGKT), 86 to 90 (DTPGH), and 140 to 143 (NKLD) each bind GTP.

This sequence belongs to the TRAFAC class translation factor GTPase superfamily. Classic translation factor GTPase family. EF-G/EF-2 subfamily.

The protein localises to the cytoplasm. In terms of biological role, catalyzes the GTP-dependent ribosomal translocation step during translation elongation. During this step, the ribosome changes from the pre-translocational (PRE) to the post-translocational (POST) state as the newly formed A-site-bound peptidyl-tRNA and P-site-bound deacylated tRNA move to the P and E sites, respectively. Catalyzes the coordinated movement of the two tRNA molecules, the mRNA and conformational changes in the ribosome. In Gluconobacter oxydans (strain 621H) (Gluconobacter suboxydans), this protein is Elongation factor G.